We begin with the raw amino-acid sequence, 251 residues long: FHA domain-containing protein FHA1 (251 aa).

The region spanning 32–89 (IILGRNSKKSTVDVDLSSLGGGMNISRNHARIFYDFTRRRFSLEVLGKNGCFVEGVLH) is the FHA domain. Residues 163-174 (EYDDEDDDEEED) are compositionally biased toward acidic residues. The tract at residues 163–209 (EYDDEDDDEEEDIRGSGKKTWRDGHEGVYASGEKKREGRSKADREAD) is disordered. The segment covering 182–206 (TWRDGHEGVYASGEKKREGRSKADR) has biased composition (basic and acidic residues).

In terms of tissue distribution, expressed in roots and vascular tissues near the shoot apex in young seedlings.

The protein resides in the nucleus. Functionally, may play a role in the control of plant organ development. Does not show transactivation activity in yeast. In Arabidopsis thaliana (Mouse-ear cress), this protein is FHA domain-containing protein FHA1.